The primary structure comprises 204 residues: Spermatogenesis-associated protein 46 (204 aa).

The interval 101-120 is disordered; it reads SSSSQENTYPREANRKSKHG.

Testis-specific.

It localises to the nucleus membrane. Functionally, plays a role in spermiogenesis and fertilization. The sequence is that of Spermatogenesis-associated protein 46 (Spata46) from Mus musculus (Mouse).